A 318-amino-acid chain; its full sequence is Ficolin-1-B (318 aa).

The N-terminal stretch at 1-19 (MTRWVQTFLLLVAVIRSYA) is a signal peptide. A Collagen-like domain is found at 42-99 (GCPGIPGVPGPQGPSGPAGAKGEKGFPGIPGKMGPTGLKGERGISGPKGQKGDKGDPG). In terms of domain architecture, Fibrinogen C-terminal spans 100–318 (IPVVGMAQNC…VSEIKFRPQP (219 aa)). The cysteines at positions 109 and 137 are disulfide-linked. 2 N-linked (GlcNAc...) asparagine glycosylation sites follow: Asn205 and Asn222. Residue Asp253 coordinates Ca(2+). Asn254 carries N-linked (GlcNAc...) asparagine glycosylation. Ca(2+) is bound by residues Asp255 and Ser257. A disulfide bridge links Cys261 with Cys274. 273–275 (SCH) lines the a carbohydrate pocket. Asn287 is a glycosylation site (N-linked (GlcNAc...) asparagine).

This sequence belongs to the ficolin lectin family. As to quaternary structure, homotrimer. May form higher-order oligomers. In terms of processing, N-glycosylated. Expressed in peripheral blood leukocytes. Also detected at lower levels in spleen and lung.

It is found in the secreted. Its function is as follows. May function in innate immunity through activation of the lectin complement pathway. Binds to GalNAc and GlcNAc carbohydrate moieties. This chain is Ficolin-1-B, found in Xenopus laevis (African clawed frog).